Here is a 203-residue protein sequence, read N- to C-terminus: Protein ILM1 (203 aa).

The Cytoplasmic segment spans residues 1–3; sequence MAQ. Residues 4 to 24 form a helical membrane-spanning segment; the sequence is ALNSTNIAFFRVAFLFTIAFF. The Lumenal segment spans residues 25 to 58; sequence CLKNVNSILQNTYFIVLTQAMNLPQLTLSRYSGQ. The helical transmembrane segment at 59–79 threads the bilayer; sequence LGLFALLFTLNGVHDLIPLLE. Residues 80-92 are Cytoplasmic-facing; it reads NNVKYFQSVVPVR. Residues 93–113 form a helical membrane-spanning segment; the sequence is LLIFFILTSISYLWESNFYVH. Position 114 (Asn114) is a topological domain, lumenal. A helical transmembrane segment spans residues 115-135; the sequence is NSVFIYCFAEVWINFLLYNAI. Residues 136 to 203 lie on the Cytoplasmic side of the membrane; sequence REEKNEEFKR…KGNDDSDAKK (68 aa). The span at 175 to 187 shows a compositional bias: acidic residues; the sequence is INDEENDDEDGKD. The interval 175-203 is disordered; that stretch reads INDEENDDEDGKDNDDNNEKGNDDSDAKK. Basic and acidic residues predominate over residues 188–203; it reads NDDNNEKGNDDSDAKK.

This sequence belongs to the ILM1 family.

The protein localises to the endoplasmic reticulum membrane. The sequence is that of Protein ILM1 (ILM1) from Saccharomyces cerevisiae (strain ATCC 204508 / S288c) (Baker's yeast).